Reading from the N-terminus, the 865-residue chain is Ribosome biogenesis protein BOP1 homolog (865 aa).

2 disordered regions span residues 1–195 (MVAN…LKLG) and 207–240 (KTRGLGVFPPVPKRKGKAAQDEYAAGDTSDEEDI). Acidic residues-rich tracts occupy residues 30 to 44 (LDESNDEDNSNESDY), 57 to 79 (NEGEDSSDSDGEYATDDDEDDVL), and 87 to 159 (DGEE…EEEA). Basic and acidic residues predominate over residues 160 to 180 (KENGKEKPAKAKAERKQREEQ). WD repeat units follow at residues 526–565 (GHTSLIRCISVEPKGEYIVTGSDDMTVKIWEISTARCIRT), 567–607 (PTGD…YMLV), 651–693 (THFR…SQVP), 696–734 (KSKGLIQCVLFHPIKPCLFVATQRHIRVYDLVKQLMMKK), 737–776 (PGCKWISSMAIHPKGDNLLIGTYEKRLMWFDLDLSTKPYQ), 780–819 (IHNAAIRSVAFHPRYPLFASAGDDRSVIVSHGMVYNDLLQ), and 835–865 (VNDFSVFDVVFHPTQPWVFSSGADNTVRLYT).

Belongs to the WD repeat BOP1/ERB1 family.

It is found in the nucleus. The protein localises to the nucleolus. Its subcellular location is the nucleoplasm. Its function is as follows. Required for maturation of ribosomal RNAs and formation of the large ribosomal subunit. This is Ribosome biogenesis protein BOP1 homolog from Anopheles gambiae (African malaria mosquito).